Reading from the N-terminus, the 185-residue chain is Ribosome-recycling factor (185 aa).

The protein belongs to the RRF family.

Its subcellular location is the cytoplasm. Its function is as follows. Responsible for the release of ribosomes from messenger RNA at the termination of protein biosynthesis. May increase the efficiency of translation by recycling ribosomes from one round of translation to another. This Thermobifida fusca (strain YX) protein is Ribosome-recycling factor.